Consider the following 213-residue polypeptide: Glycerol-3-phosphate acyltransferase (213 aa).

A run of 6 helical transmembrane segments spans residues 2–22 (ITIVLLILAYLLGSIPSGLWI), 52–74 (AGMATFVIDFFKGTLATLLPIIF), 81–100 (PLIFGLLAVIGHTFPIFAGF), 112–132 (VIFGFAPIFCLYLAIIFFGAL), 143–163 (VTASIAAVIGVLLFPLFGFIL), and 164–184 (SNYDSLFIAIILALASLIIIR).

Belongs to the PlsY family. As to quaternary structure, probably interacts with PlsX.

The protein resides in the cell membrane. The enzyme catalyses an acyl phosphate + sn-glycerol 3-phosphate = a 1-acyl-sn-glycero-3-phosphate + phosphate. The protein operates within lipid metabolism; phospholipid metabolism. In terms of biological role, catalyzes the transfer of an acyl group from acyl-phosphate (acyl-PO(4)) to glycerol-3-phosphate (G3P) to form lysophosphatidic acid (LPA). This enzyme utilizes acyl-phosphate as fatty acyl donor, but not acyl-CoA or acyl-ACP. This chain is Glycerol-3-phosphate acyltransferase, found in Streptococcus pneumoniae (strain ATCC 700669 / Spain 23F-1).